Here is a 219-residue protein sequence, read N- to C-terminus: Glycosylphosphatidylinositol anchor biosynthesis protein 11 (219 aa).

The Cytoplasmic segment spans residues 1 to 45; the sequence is MPAKKRTRKTVKKTVSFSDDTTLTTHQNREKKNVDHDRPPVYVRK. Position 16 is a phosphoserine (serine 16). Residues 46–66 traverse the membrane as a helical segment; sequence TPLMTFPYHLVALLYYYVFVS. Position 67 (serine 67) is a topological domain, lumenal. Residues 68-88 form a helical membrane-spanning segment; that stretch reads NFNTVKLLSFLIPTQVAYLVL. Residues 89–108 lie on the Cytoplasmic side of the membrane; that stretch reads QFNKCTVYGNKIIKINYSLT. The chain crosses the membrane as a helical span at residues 109-129; it reads IICLGVTFLLSFPTMLLTILF. Over 130–135 the chain is Lumenal; it reads GAPLMD. A helical transmembrane segment spans residues 136–156; sequence LLWETWLLSLHFAFLAYPAVY. Topologically, residues 157 to 170 are cytoplasmic; it reads SVFNCDFKVGLWKK. A helical membrane pass occupies residues 171–191; it reads YFIFIVVGGWISCVVIPLDWD. The Lumenal segment spans residues 192–198; it reads RDWQNWP. Residues 199–217 traverse the membrane as a helical segment; that stretch reads IPIVVGGYLGALVGYTIGA. Residues 218 to 219 are Cytoplasmic-facing; that stretch reads YI.

The protein belongs to the PIGF family.

The protein resides in the endoplasmic reticulum membrane. It functions in the pathway glycolipid biosynthesis; glycosylphosphatidylinositol-anchor biosynthesis. Acts in the GPI biosynthetic pathway between GlcNAc-PI synthesis and GPI transfer to protein. Required for the formation of complete GPI precursors CP1 and CP2. The polypeptide is Glycosylphosphatidylinositol anchor biosynthesis protein 11 (GPI11) (Saccharomyces cerevisiae (strain ATCC 204508 / S288c) (Baker's yeast)).